The chain runs to 248 residues: Pyridoxal 4-dehydrogenase (248 aa).

11–35 is an NAD(+) binding site; that stretch reads LVTGAAQGIGKAIAARLAADGATVI. Ser-141 lines the substrate pocket. Residue Tyr-154 is the Proton acceptor of the active site.

It belongs to the short-chain dehydrogenases/reductases (SDR) family. In terms of assembly, homotetramer.

The catalysed reaction is pyridoxal + NAD(+) = 4-pyridoxolactone + NADH + H(+). Its pathway is cofactor degradation; B6 vitamer degradation; 4-pyridoxate from pyridoxal: step 1/2. Functionally, involved in the degradation of pyridoxine or pyridoxamine (free, phosphate-unbound, forms of vitamin B6). Oxidizes pyridoxal to 4-pyridoxolactone, but does not have activity toward pyridoxal 5'-phosphate, pyridoxine, pyridoxamine, pyridoxamine 5'-phosphate, 4-phthalaldehyde, 2-nitrobenzaldehyde, pyridine, formaldehyde, 2-carboxybenzaldehyde or sugars. The protein is Pyridoxal 4-dehydrogenase of Mesorhizobium japonicum (strain LMG 29417 / CECT 9101 / MAFF 303099) (Mesorhizobium loti (strain MAFF 303099)).